A 438-amino-acid polypeptide reads, in one-letter code: GTPase Obg (438 aa).

One can recognise an Obg domain in the interval 2 to 160 (SMFLDQVTID…RKIELELKVL (159 aa)). The segment at 128 to 147 (NIRFASPRNPAPEIAENGEP) is disordered. In terms of domain architecture, OBG-type G spans 161–339 (ADVGLVGFPS…LLNATADLLE (179 aa)). Residues 167–174 (GFPSVGKS), 192–196 (FTTLV), 214–217 (DLPG), 284–287 (NKMD), and 320–322 (SGV) contribute to the GTP site. Ser-174 and Thr-194 together coordinate Mg(2+). The 79-residue stretch at 360–438 (GFQPEGPEFT…IGNFEFEFVE (79 aa)) folds into the OCT domain.

Belongs to the TRAFAC class OBG-HflX-like GTPase superfamily. OBG GTPase family. As to quaternary structure, monomer. Mg(2+) serves as cofactor.

It localises to the cytoplasm. In terms of biological role, an essential GTPase which binds GTP, GDP and possibly (p)ppGpp with moderate affinity, with high nucleotide exchange rates and a fairly low GTP hydrolysis rate. Plays a role in control of the cell cycle, stress response, ribosome biogenesis and in those bacteria that undergo differentiation, in morphogenesis control. This is GTPase Obg from Enterococcus faecalis (strain ATCC 700802 / V583).